Reading from the N-terminus, the 341-residue chain is UDP-N-acetyl-alpha-D-glucosaminouronate 4-epimerase (341 aa).

Residues Phe27, Ile28, Asp47, Ala50, Thr51, Gly52, Asp78, Ile79, and Gln98 each contribute to the NAD(+) site. A UDP-N-acetyl-alpha-D-galactosamine-binding site is contributed by Ser103. Thr117 is an NAD(+) binding site. Residues Ser142, Ser143, and Tyr166 each contribute to the UDP-N-acetyl-alpha-D-galactosamine site. NAD(+) is bound by residues Tyr166 and Lys170. Tyr166 serves as the catalytic Proton acceptor. Asn195 contacts UDP-N-acetyl-alpha-D-galactosamine. Val196 lines the NAD(+) pocket. Residues Val210, Tyr225, Asn227, Arg234, Arg299, and Asp302 each contribute to the UDP-N-acetyl-alpha-D-galactosamine site.

The protein belongs to the NAD(P)-dependent epimerase/dehydratase family. As to quaternary structure, homodimer. NAD(+) is required as a cofactor.

It carries out the reaction UDP-2-acetamido-2-deoxy-alpha-D-glucuronate = UDP-2-acetamido-2-deoxy-alpha-D-galacturonate. It catalyses the reaction UDP-N-acetyl-alpha-D-glucosamine = UDP-N-acetyl-alpha-D-galactosamine. It functions in the pathway bacterial outer membrane biogenesis; LPS O-antigen biosynthesis. Its function is as follows. Epimerase required for the biosynthesis of the B-band O antigen of serotype O6 lipopolysaccharide. Catalyzes the reversible epimerization of UDP-N-acetylglucosaminuronic acid (UDP-GlcNAcA) to UDP-N-acetylgalactosaminuronic acid (UDP-GalNAcA). Also catalyzes the reversible epimerization of UDP-N-acetylglucosamine (UDP-GlcNAc) to UDP-N-acetylgalactosamine (UDP-GalNAc). Has very low epimerase activity with UDP-glucose (UDP-Glc) and UDP-galactose (UDP-Gal). The protein is UDP-N-acetyl-alpha-D-glucosaminouronate 4-epimerase of Pseudomonas aeruginosa.